The sequence spans 157 residues: Tripartite terminase subunit 2 (157 aa).

A disordered region spans residues 1-69 (MSWAKQRVPF…DGEDGHALPD (69 aa)). Residues 11 to 27 (LDDDDGEEENDVQDDVD) show a composition bias toward acidic residues.

The protein belongs to the herpesviridae TRM2 protein family. In terms of assembly, associates with TRM1 and TRM3 to form the tripartite terminase complex.

Its subcellular location is the host nucleus. Component of the molecular motor that translocates viral genomic DNA in empty capsid during DNA packaging. Forms a tripartite terminase complex together with TRM1 and TRM3 in the host cytoplasm. Once the complex reaches the host nucleus, it interacts with the capsid portal vertex. This portal forms a ring in which genomic DNA is translocated into the capsid. In Homo sapiens (Human), this protein is Tripartite terminase subunit 2.